Here is a 327-residue protein sequence, read N- to C-terminus: Aspartate--ammonia ligase (327 aa).

This sequence belongs to the class-II aminoacyl-tRNA synthetase family. AsnA subfamily.

The protein localises to the cytoplasm. The enzyme catalyses L-aspartate + NH4(+) + ATP = L-asparagine + AMP + diphosphate + H(+). It functions in the pathway amino-acid biosynthesis; L-asparagine biosynthesis; L-asparagine from L-aspartate (ammonia route): step 1/1. This is Aspartate--ammonia ligase from Bacillus cytotoxicus (strain DSM 22905 / CIP 110041 / 391-98 / NVH 391-98).